Reading from the N-terminus, the 34-residue chain is Dermaseptin-S2 (34 aa).

Belongs to the frog skin active peptide (FSAP) family. Dermaseptin subfamily. Expressed by the skin glands.

The protein resides in the secreted. In terms of biological role, potent antimicrobial peptide with activity against bacteria and protozoa. Also has activity against fungi. Probably acts by disturbing membrane functions with its amphipathic structure. This chain is Dermaseptin-S2, found in Phyllomedusa sauvagei (Sauvage's leaf frog).